The sequence spans 505 residues: Glutamyl-tRNA(Gln) amidotransferase subunit A, mitochondrial (505 aa).

Residues K76 and S158 each act as charge relay system in the active site. Residue S182 is the Acyl-ester intermediate of the active site.

Belongs to the amidase family. GatA subfamily. As to quaternary structure, subunit of the heterotrimeric GatCAB amidotransferase (AdT) complex, composed of A, B and C subunits.

The protein resides in the mitochondrion. It catalyses the reaction L-glutamyl-tRNA(Gln) + L-glutamine + ATP + H2O = L-glutaminyl-tRNA(Gln) + L-glutamate + ADP + phosphate + H(+). Functionally, allows the formation of correctly charged Gln-tRNA(Gln) through the transamidation of misacylated Glu-tRNA(Gln) in the mitochondria. The reaction takes place in the presence of glutamine and ATP through an activated gamma-phospho-Glu-tRNA(Gln). The protein is Glutamyl-tRNA(Gln) amidotransferase subunit A, mitochondrial of Ixodes scapularis (Black-legged tick).